The chain runs to 473 residues: MATATEQWVLVEMVQALYEAPAYHLILEGILILWIIRLLFSKTYKLQERSDLTVKEKEELIEEWQPEPLVPPVPKDHPALNYNIVSGPPSHKTVVNGKECINFASFNFLGLLDNPRVKAAALASLKKYGVGTCGPRGFYGTFDVHLDLEDRLAKFMKTEEAIIYSYGFATIASAIPAYSKRGDIVFVDRAACFAIQKGLQASRSDIKLFKHNDMADLERLLKEQEIEDQKNPRKARVTRRFIVVEGLYMNTGTICPLPELVKLKYKYKARIFLEESLSFGVLGEHGRGVTEHYGINIDDIDLISANMENALASIGGFCCGRSFVIDHQRLSGQGYCFSASLPPLLAAAAIEALNIMEENPGIFAVLKEKCGQIHKALQGISGLKVVGESLSPAFHLQLEESTGSREQDVRLLQEIVDQCMNRSIALTQARYLEKEEKCLPPPSIRVVVTVEQTEEELERAASTIKEVAQAVLL.

Residues 1–15 (MATATEQWVLVEMVQ) lie on the Lumenal side of the membrane. Positions 1–66 (MATATEQWVL…KEELIEEWQP (66 aa)) are interaction with SPTLC2. A helical membrane pass occupies residues 16 to 36 (ALYEAPAYHLILEGILILWII). Residues 37-473 (RLLFSKTYKL…IKEVAQAVLL (437 aa)) are Cytoplasmic-facing. A Phosphotyrosine; by ABL modification is found at Y164.

This sequence belongs to the class-II pyridoxal-phosphate-dependent aminotransferase family. In terms of assembly, component of the serine palmitoyltransferase (SPT) complex, which is also composed of SPTLC2 or SPTLC3 and SPTSSA or SPTSSB. The heterodimer consisting of SPTLC1 and SPTLC2/SPTLC3 forms the catalytic core of the enzyme, while SPTSSA or SPTSSB subunits determine substrate specificity. SPT also interacts with ORMDL proteins, especially ORMDL3, which negatively regulate SPT activity in the presence of ceramides. Forms dimers of heterodimers with SPTLC2. Interacts with RTN4 (isoform B). The cofactor is pyridoxal 5'-phosphate. Post-translationally, phosphorylation at Tyr-164 inhibits activity and promotes cell survival. As to expression, widely expressed. Not detected in small intestine.

Its subcellular location is the endoplasmic reticulum membrane. It catalyses the reaction L-serine + hexadecanoyl-CoA + H(+) = 3-oxosphinganine + CO2 + CoA. The catalysed reaction is octadecanoyl-CoA + L-serine + H(+) = 3-oxoeicosasphinganine + CO2 + CoA. The enzyme catalyses tetradecanoyl-CoA + L-serine + H(+) = 3-oxohexadecasphinganine + CO2 + CoA. It carries out the reaction dodecanoyl-CoA + L-serine + H(+) = 3-oxotetradecasphinganine + CO2 + CoA. It functions in the pathway lipid metabolism; sphingolipid metabolism. SPT complex catalytic activity is negatively regulated by ORMDL proteins, including ORMDL3, in the presence of ceramides. This mechanism allows to maintain ceramide levels at sufficient concentrations for the production of complex sphingolipids, but which prevents the accumulation of ceramides to levels that trigger apoptosis. Functionally, component of the serine palmitoyltransferase multisubunit enzyme (SPT) that catalyzes the initial and rate-limiting step in sphingolipid biosynthesis by condensing L-serine and activated acyl-CoA (most commonly palmitoyl-CoA) to form long-chain bases. The SPT complex is also composed of SPTLC2 or SPTLC3 and SPTSSA or SPTSSB. Within this complex, the heterodimer with SPTLC2 or SPTLC3 forms the catalytic core. The composition of the serine palmitoyltransferase (SPT) complex determines the substrate preference. The SPTLC1-SPTLC2-SPTSSA complex shows a strong preference for C16-CoA substrate, while the SPTLC1-SPTLC3-SPTSSA isozyme uses both C14-CoA and C16-CoA as substrates, with a slight preference for C14-CoA. The SPTLC1-SPTLC2-SPTSSB complex shows a strong preference for C18-CoA substrate, while the SPTLC1-SPTLC3-SPTSSB isozyme displays an ability to use a broader range of acyl-CoAs, without apparent preference. Required for adipocyte cell viability and metabolic homeostasis. This chain is Serine palmitoyltransferase 1 (SPTLC1), found in Homo sapiens (Human).